Consider the following 156-residue polypeptide: Transcription elongation factor GreA (156 aa).

Residues 1–84 adopt a coiled-coil conformation; the sequence is MAKYTISKHR…IEDVLRSTDE (84 aa).

It belongs to the GreA/GreB family.

Functionally, necessary for efficient RNA polymerase transcription elongation past template-encoded arresting sites. The arresting sites in DNA have the property of trapping a certain fraction of elongating RNA polymerases that pass through, resulting in locked ternary complexes. Cleavage of the nascent transcript by cleavage factors such as GreA or GreB allows the resumption of elongation from the new 3'terminus. GreA releases sequences of 2 to 3 nucleotides. The chain is Transcription elongation factor GreA from Ureaplasma parvum serovar 3 (strain ATCC 27815 / 27 / NCTC 11736).